Here is a 174-residue protein sequence, read N- to C-terminus: Large ribosomal subunit protein uL22 (174 aa).

This sequence belongs to the universal ribosomal protein uL22 family. In terms of assembly, part of the 50S ribosomal subunit.

Its function is as follows. This protein binds specifically to 23S rRNA. It makes multiple contacts with different domains of the 23S rRNA in the assembled 50S subunit and ribosome. Functionally, the globular domain of the protein is located near the polypeptide exit tunnel on the outside of the subunit, while an extended beta-hairpin is found that lines the wall of the exit tunnel in the center of the 70S ribosome. This is Large ribosomal subunit protein uL22 from Nanoarchaeum equitans (strain Kin4-M).